The primary structure comprises 200 residues: NADH-quinone oxidoreductase subunit C (200 aa).

The protein belongs to the complex I 30 kDa subunit family. As to quaternary structure, NDH-1 is composed of 14 different subunits. Subunits NuoB, C, D, E, F, and G constitute the peripheral sector of the complex.

The protein resides in the cell inner membrane. The catalysed reaction is a quinone + NADH + 5 H(+)(in) = a quinol + NAD(+) + 4 H(+)(out). Its function is as follows. NDH-1 shuttles electrons from NADH, via FMN and iron-sulfur (Fe-S) centers, to quinones in the respiratory chain. The immediate electron acceptor for the enzyme in this species is believed to be ubiquinone. Couples the redox reaction to proton translocation (for every two electrons transferred, four hydrogen ions are translocated across the cytoplasmic membrane), and thus conserves the redox energy in a proton gradient. In Burkholderia thailandensis (strain ATCC 700388 / DSM 13276 / CCUG 48851 / CIP 106301 / E264), this protein is NADH-quinone oxidoreductase subunit C.